Here is a 559-residue protein sequence, read N- to C-terminus: YTH domain-containing family protein 1 (559 aa).

Positions 1 to 49 are disordered; the sequence is MSATSVDPQRTKGQDNKVQNGSLHQKDAVHDNDFEPYLSGQSNPSNSYP. Serine 2 bears the N-acetylserine mark. Positions 24–33 are enriched in basic and acidic residues; it reads HQKDAVHDND. Position 182 is a phosphoserine (serine 182). A disordered region spans residues 239-365; it reads SKPAKPQPKM…PTSAPSVESH (127 aa). 2 stretches are compositionally biased toward low complexity: residues 279–305 and 314–326; these read PAPK…AQPL and QPQY…PLQP. Residues 343–361 show a composition bias toward polar residues; the sequence is GANSDSNSVGNAQPTSAPS. The region spanning 389–523 is the YTH domain; it reads GRVFIIKSYS…EKAKQVLKII (135 aa). RNA contacts are provided by residues 395 to 397, aspartate 401, 411 to 412, asparagine 441, tryptophan 465, and tryptophan 470; these read KSY and WC.

This sequence belongs to the YTHDF family. YTHDF1 subfamily. Interacts with CNOT1; promoting recruitment of the CCR4-NOT complex. Interacts with ribosomes. Interacts with eIF3 (EIF3A or EIF3B). Interacts with YTHDF3. Post-translationally, ubiquitinated by the CUL7-FBXW8 E3 ligase complex leading to degradation. Deubiquitinated and stabilized by USP5 by removing 'Lys-11'-linked polyubiquitination. As to expression, in brain, preferentially expressed in the hippocampus.

The protein localises to the cytoplasm. It is found in the P-body. Its subcellular location is the stress granule. Its function is as follows. Specifically recognizes and binds N6-methyladenosine (m6A)-containing mRNAs, and regulates their stability. M6A is a modification present at internal sites of mRNAs and some non-coding RNAs and plays a role in mRNA stability and processing. Acts as a regulator of mRNA stability by promoting degradation of m6A-containing mRNAs via interaction with the CCR4-NOT complex. The YTHDF paralogs (YTHDF1, YTHDF2 and YTHDF3) share m6A-containing mRNAs targets and act redundantly to mediate mRNA degradation and cellular differentiation. Required to facilitate learning and memory formation in the hippocampus by binding to m6A-containing neuronal mRNAs. Acts as a regulator of axon guidance by binding to m6A-containing ROBO3 transcripts. Acts as a negative regulator of antigen cross-presentation in myeloid dendritic cells. In the context of tumorigenesis, negative regulation of antigen cross-presentation limits the anti-tumor response by reducing efficiency of tumor-antigen cross-presentation. Promotes formation of phase-separated membraneless compartments, such as P-bodies or stress granules, by undergoing liquid-liquid phase separation upon binding to mRNAs containing multiple m6A-modified residues: polymethylated mRNAs act as a multivalent scaffold for the binding of YTHDF proteins, juxtaposing their disordered regions and thereby leading to phase separation. The resulting mRNA-YTHDF complexes then partition into different endogenous phase-separated membraneless compartments, such as P-bodies, stress granules or neuronal RNA granules. The chain is YTH domain-containing family protein 1 from Mus musculus (Mouse).